Reading from the N-terminus, the 612-residue chain is Dihydroxy-acid dehydratase (612 aa).

Asp-81 is a Mg(2+) binding site. Cys-122 contributes to the [2Fe-2S] cluster binding site. Mg(2+) is bound by residues Asp-123 and Lys-124. At Lys-124 the chain carries N6-carboxylysine. Cys-195 serves as a coordination point for [2Fe-2S] cluster. Glu-491 contacts Mg(2+). Ser-517 functions as the Proton acceptor in the catalytic mechanism.

The protein belongs to the IlvD/Edd family. As to quaternary structure, homodimer. [2Fe-2S] cluster is required as a cofactor. The cofactor is Mg(2+).

It carries out the reaction (2R)-2,3-dihydroxy-3-methylbutanoate = 3-methyl-2-oxobutanoate + H2O. The enzyme catalyses (2R,3R)-2,3-dihydroxy-3-methylpentanoate = (S)-3-methyl-2-oxopentanoate + H2O. It participates in amino-acid biosynthesis; L-isoleucine biosynthesis; L-isoleucine from 2-oxobutanoate: step 3/4. Its pathway is amino-acid biosynthesis; L-valine biosynthesis; L-valine from pyruvate: step 3/4. In terms of biological role, functions in the biosynthesis of branched-chain amino acids. Catalyzes the dehydration of (2R,3R)-2,3-dihydroxy-3-methylpentanoate (2,3-dihydroxy-3-methylvalerate) into 2-oxo-3-methylpentanoate (2-oxo-3-methylvalerate) and of (2R)-2,3-dihydroxy-3-methylbutanoate (2,3-dihydroxyisovalerate) into 2-oxo-3-methylbutanoate (2-oxoisovalerate), the penultimate precursor to L-isoleucine and L-valine, respectively. The chain is Dihydroxy-acid dehydratase from Sinorhizobium fredii (strain NBRC 101917 / NGR234).